Consider the following 802-residue polypeptide: MPQTSAWQLNDTTARPPPPPPPPGSEAGGSDGASMNGANTLPRVSKRVSAAGKTSNIPRFKRPHLPHSTRPLSAVLTSSSSPVVHRKISPSSSAPSTSSAHRRFSHLPQQHFHHHIHHNQTAVISEETLTTPRASTLNLNQTSVFPTAISQGSMPNSGTNTAEASMTSSVCAMETEGTNGDELAESRDMVSEMQRRCRIGPSGYPHLLKAKRLRFYRNGDQYFKGIQYALQSDRVKSMQPLMEDLMKTVICDSTALPHGIRHIFTIDGAQRITSVDQFEDGGGYVCSSTDAFKPVDYSRAAEPSWRLTLANRYNRHLETKKLALSVVEPCHENTDFVFPRIIKVIRNGVKPRRISRHLLNKKTARSFDQVLRDLTFVVKLDSGAIRKLFTLSGRPVLSLQDFFRDDDVFVAYGGNEKMAADDLLVASEEHKSVGSGTSSNMRRTSRRSTMPNRNESLRHDRSGSVIPDQDQQRLPPLLDEKFQLVRLIGDGNTAVVYEVIDKTNNDDRKAMKVIARENVIGKEHLIEMELAILQKIDHTFIVQLYDHWFVDDSYYLSLELIEMGDLFEHLRIVRRVPERDAVRMMTCLGQALEYIHELGIVHRDVKLENLLIVKDEFGELGVKLADFGLAAEMPKDFGVLSTICGTPTYVAPEVLNKTGYGCKVDIWAAGVILYAILVGFPPFQSSDGSEQDLFSAIMSGEFSFPSPSWDDVSWSVRHLIMCLIHTDPFHRYSAGELLNDEWMVNLGDVDPEYEEWAHRFVQSKMHVEEEQETPYEYYTSRRTSMDELSESAAVEFSYSCES.

Polar residues predominate over residues 1–13 (MPQTSAWQLNDTT). The tract at residues 1–102 (MPQTSAWQLN…SAPSTSSAHR (102 aa)) is disordered. A compositionally biased stretch (pro residues) spans 15–24 (RPPPPPPPPG). A compositionally biased stretch (low complexity) spans 89–99 (SPSSSAPSTSS). Doublecortin domains follow at residues 211–298 (KRLR…VDYS) and 340–423 (RIIK…ADDL). The segment at 430–470 (HKSVGSGTSSNMRRTSRRSTMPNRNESLRHDRSGSVIPDQD) is disordered. A compositionally biased stretch (low complexity) spans 434-454 (GSGTSSNMRRTSRRSTMPNRN). The region spanning 482 to 743 (FQLVRLIGDG…AGELLNDEWM (262 aa)) is the Protein kinase domain. ATP-binding positions include 488 to 496 (IGDGNTAVV) and lysine 512. Aspartate 604 functions as the Proton acceptor in the catalytic mechanism.

Belongs to the protein kinase superfamily. CAMK Ser/Thr protein kinase family. CaMK subfamily. Interacts with tac-1. In terms of tissue distribution, expressed in AFD thermosensory neurons. Expressed in cells near the nerve ring, in motor neurons in the ventral nerve cord and in the six touch receptor neurons including ALML/R, PLML/R and AVM and PVM. Expressed in hypodermal and neural tissues and in the germline.

The protein resides in the cytoplasm. Its subcellular location is the cytoskeleton. The protein localises to the microtubule organizing center. It is found in the centrosome. It localises to the spindle. It carries out the reaction L-seryl-[protein] + ATP = O-phospho-L-seryl-[protein] + ADP + H(+). The enzyme catalyses L-threonyl-[protein] + ATP = O-phospho-L-threonyl-[protein] + ADP + H(+). In terms of biological role, probable kinase. Kinase activity may be involved in positioning of spindle poles in meiosis and mitosis. Plays a role in spindle positioning during asymmetric division of one-cell stage embryos. Affects spindle position by promoting microtubule assembly during anaphase. Plays a role in the assembly and stability of oocyte spindle, perhaps balancing the forces in the spindle and maintaining their morphology during metaphase. Plays a role in cell division and in embryonic viability up until gastrulation. Required for neuronal morphology and polarity and restricting ectopic process outgrowth; probably as a result of a role in maintaining microtubule integrity. Involved in maintaining neuronal microtubule number, length and packing. May promote axonal and synaptic growth. Plays a role in regulating thermotaxis responses in AFD thermosensory neurons. Required for touch sensitivity in adult touch response receptor neurons. This is Serine/threonine-protein kinase zyg-8 from Caenorhabditis elegans.